The chain runs to 304 residues: Aquaglyceroporin-3 (304 aa).

Residues 1 to 68 lie on the Cytoplasmic side of the membrane; sequence MQSQPDNVAY…LRLNYRDYMG (68 aa). A helical membrane pass occupies residues 69–89; that stretch reads ELLGTFVLLFMGNGVVATVII. The Extracellular portion of the chain corresponds to 90–95; it reads DGKLGF. Residues 96–116 form a helical membrane-spanning segment; the sequence is LSITLGWGIAVTMALYVSLGI. Over 117–142 the chain is Cytoplasmic; sequence SSGHLNPAVTVGNAVFGDFPWRKVPG. The chain crosses the membrane as a helical span at residues 143–163; it reads YIAAQMLGAFLGAACAYGVFA. Topologically, residues 164 to 196 are extracellular; that stretch reads DLLKAHGGGELIAFGEKGTAGVFSTYPRDSNGL. The helical transmembrane segment at 197–217 threads the bilayer; that stretch reads FSCIFGEFICTAMLLFCVCGI. Residues 218-231 are Cytoplasmic-facing; the sequence is FDPNNSPAKGHEPL. Residues 232–252 traverse the membrane as a helical segment; it reads AVGALVFAIGNNIGYSTGYAI. At 253 to 277 the chain is on the extracellular side; that stretch reads NPARDFGPRVFSSFLYGGEVFSHAN. The chain crosses the membrane as a helical span at residues 278–298; sequence YYFWVPLVIPLFGGIFGLFLY. The Cytoplasmic segment spans residues 299–304; it reads KYFVPH.

Belongs to the MIP/aquaporin (TC 1.A.8) family.

The protein resides in the cell membrane. The enzyme catalyses glycerol(in) = glycerol(out). The catalysed reaction is H2O(in) = H2O(out). It carries out the reaction urea(in) = urea(out). Its function is as follows. Mediates water and glycerol transport across the cell membrane. Permeable to urea. Permeable to methylamine/methylammonium. Permeable to dihydroxyacetone. Permeable to erythritol and ribitol. This chain is Aquaglyceroporin-3, found in Trypanosoma brucei brucei.